The following is a 521-amino-acid chain: Glucose-1-phosphate adenylyltransferase small subunit, chloroplastic/amyloplastic (521 aa).

Residues 1 to 32 form a disordered region; sequence MAASIGALKSSPSSNNCINERRNDSTRAVSSR. Residues 1–72 constitute a chloroplast transit peptide; the sequence is MAASIGALKS…RSPMIVSPKA (72 aa). Lys268 lines the substrate pocket. An allosteric regulation region spans residues 444 to 454; that stretch reads TDADRKLLAAK.

It belongs to the bacterial/plant glucose-1-phosphate adenylyltransferase family. Heterotetramer. As to expression, leaves and tubers.

The protein localises to the plastid. It localises to the chloroplast. The protein resides in the amyloplast. The catalysed reaction is alpha-D-glucose 1-phosphate + ATP + H(+) = ADP-alpha-D-glucose + diphosphate. Its pathway is glycan biosynthesis; starch biosynthesis. Its activity is regulated as follows. Activated by 3'phosphoglycerate, inhibited by orthophosphate. Allosteric regulation. This protein plays a role in synthesis of starch. It catalyzes the synthesis of the activated glycosyl donor, ADP-glucose from Glc-1-P and ATP. The polypeptide is Glucose-1-phosphate adenylyltransferase small subunit, chloroplastic/amyloplastic (Solanum tuberosum (Potato)).